Consider the following 755-residue polypeptide: MKMSHLPFAWISDEAKCFLSRFFENISSLPVVDIRENPWILSQCIVKTGNSINNVKTLYNNLILWIYFHQTLCKKKPDYEEVWQEILKVQKILKDYLEQRQMITDYSSLTSFNKVGFETEFKNVAKDLLKLGSFLRWGTVTHAADYVNLTTEERAEIGENLQKAKNNMLSFTIYQIVDPWNENGYYVTNINRLLYLGNLLITLHGSWMNMEKLALNTINEKKNAILKAIENNKNFVSIYSYQILSLPLTSHRVTSFFKILTEDFDVITKSLELHALPVKSTWDDRVKFTPEPIQTFKVLTDLSKSSLSNQFESSSKKTSHGSSFNPEPFIKTEQRSNNTLSKDLFVGSEDGLLSSVKKDSMILDEPRNSTSINNSKKMHRILQTEILDLTDQTMHRPEDKVNQFNEIAVAPDGINQVIDTLSKLDLHNSNKVIDIVSSPKVNVVQLPKNKIDYHSTFFLPENEVNRQNGVQSRDQLSKNSTNDLQKILELRERIKTIKQNNEDIFKLPSEKRRKEIVHENLQSFDDEHNEMSLPPQDQKSIKQKNGNKANSSTKTLNMIGTNDVNASMKEKESASSAKKNQLVKDVKWTPSSSLLDLSRRNDLLQKELFESGLGEKVKKLLTDFTDTISLEERSLKDVLEPPKKTDVSNIATFNDNNLKNLLNSRKRDPLFQNFSFTEKMQPVRSPFFLPNAEIQDFDSGSLLTGKETQNTIFGASKAQENGDKDLIDLENSVQKDDDIVNKLVSHLTHSEEDVV.

Disordered regions lie at residues 312–333 (ESSS…IKTE) and 522–555 (QSFD…STKT). Residues 535–555 (PQDQKSIKQKNGNKANSSTKT) show a composition bias toward polar residues.

Belongs to the herpesviridae large structural phosphoprotein family. In terms of processing, phosphorylated at multiple sites.

It localises to the virion tegument. The protein is Large structural phosphoprotein (U11) of Homo sapiens (Human).